A 131-amino-acid chain; its full sequence is MTAKIFSLDEVSKHKTKSDLWVVIHNKVYDITRFVVEHPGGEEVLVDEGGKDATEAFEDIGHSDEAREMLEEYLIGSLDEASRTKEYNVNVIRAGELPEEKKGSSLRIILPALAIIGALVYKYVIVPKAHQ.

The 77-residue stretch at 3–79 (AKIFSLDEVS…LEEYLIGSLD (77 aa)) folds into the Cytochrome b5 heme-binding domain. The heme site is built by H38 and H62. Residues 108–125 (IILPALAIIGALVYKYVI) form a helical membrane-spanning segment.

It belongs to the cytochrome b5 family.

The protein localises to the endoplasmic reticulum membrane. Its subcellular location is the microsome membrane. Functionally, membrane bound hemoprotein which function as an electron carrier for several membrane bound oxygenases. This is Cytochrome b5 from Rhizopus stolonifer (Rhizopus nigricans).